The primary structure comprises 109 residues: Putative double-stranded DNA mimic protein Ent638_2296 (109 aa).

This sequence belongs to the putative dsDNA mimic protein family.

Functionally, may act as a double-stranded DNA (dsDNA) mimic. Probably regulates the activity of a dsDNA-binding protein. The protein is Putative double-stranded DNA mimic protein Ent638_2296 of Enterobacter sp. (strain 638).